A 122-amino-acid chain; its full sequence is Large ribosomal subunit protein uL14 (122 aa).

It belongs to the universal ribosomal protein uL14 family. Part of the 50S ribosomal subunit. Forms a cluster with proteins L3 and L19. In the 70S ribosome, L14 and L19 interact and together make contacts with the 16S rRNA in bridges B5 and B8.

Its function is as follows. Binds to 23S rRNA. Forms part of two intersubunit bridges in the 70S ribosome. The sequence is that of Large ribosomal subunit protein uL14 from Sulfurovum sp. (strain NBC37-1).